Here is a 623-residue protein sequence, read N- to C-terminus: mRNA-capping enzyme (623 aa).

A TPase region spans residues 13 to 224 (MGLPDRWLHC…IDNGRPSTSQ (212 aa)). The Tyrosine-protein phosphatase domain maps to 44 to 196 (YDNQIAERRY…YDPTEDDKIL (153 aa)). Residue cysteine 136 is the Phosphocysteine intermediate of the active site. The span at 213–229 (TQIDNGRPSTSQQIPAT) shows a compositional bias: polar residues. Positions 213–243 (TQIDNGRPSTSQQIPATNGNNNQNGNQLSGG) are disordered. Over residues 230-239 (NGNNNQNGNQ) the composition is skewed to low complexity. Positions 241–585 (SGGGDNSKLF…NPVTETYLIE (345 aa)) are GTase. Lysine 311 (N6-GMP-lysine intermediate) is an active-site residue. GTP-binding positions include arginine 316, arginine 331, 357 to 359 (DTE), 477 to 479 (KWK), and 553 to 558 (RERTDK). Residues 603–623 (HHQIHQQQLHEGEPEARRQKL) are disordered. Basic and acidic residues predominate over residues 610–623 (QLHEGEPEARRQKL).

In the N-terminal section; belongs to the non-receptor class of the protein-tyrosine phosphatase family. It in the C-terminal section; belongs to the eukaryotic GTase family.

The protein resides in the nucleus. The catalysed reaction is a 5'-end triphospho-ribonucleoside in mRNA + H2O = a 5'-end diphospho-ribonucleoside in mRNA + phosphate + H(+). It catalyses the reaction a 5'-end diphospho-ribonucleoside in mRNA + GTP + H(+) = a 5'-end (5'-triphosphoguanosine)-ribonucleoside in mRNA + diphosphate. With respect to regulation, RNA triphosphatase activity is inhibited by magnesium. In terms of biological role, bifunctional mRNA-capping enzyme exhibiting RNA 5'-triphosphate monophosphatase activity in the N-terminal part and mRNA guanylyltransferase activity in the C-terminal part. Catalyzes the first two steps of cap formation: by removing the gamma-phosphate from the 5'-triphosphate end of nascent mRNA to yield a diphosphate end, and by transferring the GMP moiety of GTP to the 5'-diphosphate terminus via a covalent enzyme-GMP reaction intermediate. This chain is mRNA-capping enzyme (cel-1), found in Caenorhabditis elegans.